The primary structure comprises 165 residues: uncharacterized protein (165 aa).

The segment at 28 to 97 (EASAPSGNPP…QLSQSLEVPT (70 aa)) is disordered. A compositionally biased stretch (pro residues) spans 34–47 (GNPPPPPPPPPPPI). Composition is skewed to polar residues over residues 54–66 (KSLNSPPNHQLDN) and 73–94 (AQHTNKNYTTSNIKTQLSQSLE).

This is an uncharacterized protein from Rickettsia prowazekii (strain Madrid E).